Consider the following 121-residue polypeptide: Large ribosomal subunit protein uL18 (121 aa).

The protein belongs to the universal ribosomal protein uL18 family. In terms of assembly, part of the 50S ribosomal subunit; part of the 5S rRNA/L5/L18/L25 subcomplex. Contacts the 5S and 23S rRNAs.

Functionally, this is one of the proteins that bind and probably mediate the attachment of the 5S RNA into the large ribosomal subunit, where it forms part of the central protuberance. The protein is Large ribosomal subunit protein uL18 of Moorella thermoacetica (strain ATCC 39073 / JCM 9320).